The primary structure comprises 114 residues: NADH-quinone oxidoreductase subunit K 2 (114 aa).

The next 3 membrane-spanning stretches (helical) occupy residues 1 to 21 (MIVPFGHVLLLAGALFGLGVF), 29 to 49 (LIMIVLGVEIMLNAASIAFIG), and 62 to 82 (FVLFILAVAATEVSIGLAIIV).

Belongs to the complex I subunit 4L family. In terms of assembly, NDH-1 is composed of 14 different subunits. Subunits NuoA, H, J, K, L, M, N constitute the membrane sector of the complex.

The protein resides in the cell inner membrane. It carries out the reaction a quinone + NADH + 5 H(+)(in) = a quinol + NAD(+) + 4 H(+)(out). Its function is as follows. NDH-1 shuttles electrons from NADH, via FMN and iron-sulfur (Fe-S) centers, to quinones in the respiratory chain. The immediate electron acceptor for the enzyme in this species is believed to be ubiquinone. Couples the redox reaction to proton translocation (for every two electrons transferred, four hydrogen ions are translocated across the cytoplasmic membrane), and thus conserves the redox energy in a proton gradient. In Syntrophobacter fumaroxidans (strain DSM 10017 / MPOB), this protein is NADH-quinone oxidoreductase subunit K 2.